Here is a 34-residue protein sequence, read N- to C-terminus: Photosystem II reaction center protein M (34 aa).

A helical transmembrane segment spans residues 5-25 (ILAFIATALFILVPTSFLLII).

Belongs to the PsbM family. As to quaternary structure, PSII is composed of 1 copy each of membrane proteins PsbA, PsbB, PsbC, PsbD, PsbE, PsbF, PsbH, PsbI, PsbJ, PsbK, PsbL, PsbM, PsbT, PsbX, PsbY, PsbZ, Psb30/Ycf12, at least 3 peripheral proteins of the oxygen-evolving complex and a large number of cofactors. It forms dimeric complexes.

It localises to the plastid. The protein resides in the chloroplast thylakoid membrane. One of the components of the core complex of photosystem II (PSII). PSII is a light-driven water:plastoquinone oxidoreductase that uses light energy to abstract electrons from H(2)O, generating O(2) and a proton gradient subsequently used for ATP formation. It consists of a core antenna complex that captures photons, and an electron transfer chain that converts photonic excitation into a charge separation. This subunit is found at the monomer-monomer interface. In Triticum aestivum (Wheat), this protein is Photosystem II reaction center protein M.